Here is a 211-residue protein sequence, read N- to C-terminus: Large ribosomal subunit protein bL25 (211 aa).

This sequence belongs to the bacterial ribosomal protein bL25 family. CTC subfamily. In terms of assembly, part of the 50S ribosomal subunit; part of the 5S rRNA/L5/L18/L25 subcomplex. Contacts the 5S rRNA. Binds to the 5S rRNA independently of L5 and L18.

This is one of the proteins that binds to the 5S RNA in the ribosome where it forms part of the central protuberance. The chain is Large ribosomal subunit protein bL25 from Xanthomonas axonopodis pv. citri (strain 306).